The primary structure comprises 325 residues: Tetraacyldisaccharide 4'-kinase (325 aa).

51-58 (VVGGAGKT) contacts ATP.

This sequence belongs to the LpxK family.

The catalysed reaction is a lipid A disaccharide + ATP = a lipid IVA + ADP + H(+). It participates in glycolipid biosynthesis; lipid IV(A) biosynthesis; lipid IV(A) from (3R)-3-hydroxytetradecanoyl-[acyl-carrier-protein] and UDP-N-acetyl-alpha-D-glucosamine: step 6/6. Functionally, transfers the gamma-phosphate of ATP to the 4'-position of a tetraacyldisaccharide 1-phosphate intermediate (termed DS-1-P) to form tetraacyldisaccharide 1,4'-bis-phosphate (lipid IVA). This Paramagnetospirillum magneticum (strain ATCC 700264 / AMB-1) (Magnetospirillum magneticum) protein is Tetraacyldisaccharide 4'-kinase.